A 317-amino-acid polypeptide reads, in one-letter code: Porphobilinogen deaminase (317 aa).

Position 245 is an S-(dipyrrolylmethanemethyl)cysteine (Cys245).

It belongs to the HMBS family. Monomer. Dipyrromethane is required as a cofactor.

It carries out the reaction 4 porphobilinogen + H2O = hydroxymethylbilane + 4 NH4(+). It participates in porphyrin-containing compound metabolism; protoporphyrin-IX biosynthesis; coproporphyrinogen-III from 5-aminolevulinate: step 2/4. It functions in the pathway porphyrin-containing compound metabolism; chlorophyll biosynthesis. Its function is as follows. Tetrapolymerization of the monopyrrole PBG into the hydroxymethylbilane pre-uroporphyrinogen in several discrete steps. This is Porphobilinogen deaminase from Synechococcus sp. (strain CC9902).